A 202-amino-acid chain; its full sequence is Pectinesterase inhibitor 11 (202 aa).

Positions 1 to 21 (MAKQIFYTLFLFLLSTAILTA) are cleaved as a signal peptide. Residues Cys-43 and Cys-52 are joined by a disulfide bond. Asn-76 carries N-linked (GlcNAc...) asparagine glycosylation. A disulfide bridge links Cys-109 with Cys-160.

This sequence belongs to the PMEI family.

Its subcellular location is the secreted. The protein resides in the extracellular space. It localises to the apoplast. In terms of biological role, pectin methylesterase (PME) inhibitor involved in the maintenance of cell wall integrity in response to necrotrophic pathogens. Modulates PME activity and pectin methylesterification during infection by Botrytis cinerea and contributes to resistance against the pathogen. The chain is Pectinesterase inhibitor 11 from Arabidopsis thaliana (Mouse-ear cress).